The chain runs to 1529 residues: DNA-directed RNA polymerase subunit beta' (1529 aa).

C156, C158, C183, and C186 together coordinate Zn(2+). Residues D1328, D1330, and D1332 each contribute to the Mg(2+) site.

It belongs to the RNA polymerase beta' chain family. RpoC1 subfamily. In terms of assembly, in plastids the minimal PEP RNA polymerase catalytic core is composed of four subunits: alpha, beta, beta', and beta''. When a (nuclear-encoded) sigma factor is associated with the core the holoenzyme is formed, which can initiate transcription. It depends on Mg(2+) as a cofactor. Zn(2+) serves as cofactor.

It is found in the plastid. The protein resides in the chloroplast. The catalysed reaction is RNA(n) + a ribonucleoside 5'-triphosphate = RNA(n+1) + diphosphate. DNA-dependent RNA polymerase catalyzes the transcription of DNA into RNA using the four ribonucleoside triphosphates as substrates. The chain is DNA-directed RNA polymerase subunit beta' from Tetradesmus obliquus (Green alga).